A 235-amino-acid chain; its full sequence is Motile sperm domain-containing protein 3 (235 aa).

2 disordered regions span residues 1–25 (MRRGAPQDQELVGPGPPGRGSRGAP) and 143–171 (ELQGQPDPAPRPGPPAGTPPPTARHFQEH). Residues 33–145 (PVLVFPPDLV…RAPAYPLELQ (113 aa)) form the MSP domain. The segment covering 149–164 (DPAPRPGPPAGTPPPT) has biased composition (pro residues). Helical transmembrane passes span 180-200 (SFLLFLLTGIVSVAFLLLPLP) and 213-233 (VSLGQKLVAAYVLGLLTMVFL).

It localises to the membrane. This is Motile sperm domain-containing protein 3 (MOSPD3) from Homo sapiens (Human).